We begin with the raw amino-acid sequence, 80 residues long: Conotoxin Lt6.2 (80 aa).

The N-terminal stretch at 1–24 (MKLTRVLIIAVLFLTAYQLTTVET) is a signal peptide. The propeptide occupies 25 to 47 (YSRGKWMHRALRSTGKNPKVTRE). Intrachain disulfides connect Cys48–Cys62, Cys55–Cys66, and Cys61–Cys73.

Belongs to the conotoxin O1 superfamily. Expressed by the venom duct.

The protein resides in the secreted. This chain is Conotoxin Lt6.2, found in Conus litteratus (Lettered cone).